The sequence spans 547 residues: Solute carrier family 22 member 7 (547 aa).

Helical transmembrane passes span 21-41 (VALL…PIFL), 145-165 (ATST…GYLS), 173-193 (LLLV…ASVS), 203-223 (LTGT…LEWL), 233-253 (VLSS…GYLI), 258-278 (WLLL…WWVP), 345-365 (ISLC…GLSL), 374-396 (VYQT…YLSV), 403-423 (LTLA…LLVS), 431-451 (TALA…AYLF), 465-485 (MGLT…AALL), and 492-512 (LPKL…LLLP). Residues 521-547 (ETIQDVERKSAPSSLQEEEMPMKQVQD) form a disordered region.

This sequence belongs to the major facilitator (TC 2.A.1) superfamily. Organic cation transporter (TC 2.A.1.19) family.

Its subcellular location is the basolateral cell membrane. It localises to the apical cell membrane. The protein localises to the cell membrane. The enzyme catalyses orotate(out) + L-glutamate(in) = orotate(in) + L-glutamate(out). It carries out the reaction 3',5'-cyclic GMP(in) = 3',5'-cyclic GMP(out). It catalyses the reaction GMP(in) = GMP(out). The catalysed reaction is 2'-deoxyguanosine(in) = 2'-deoxyguanosine(out). The enzyme catalyses GDP(in) = GDP(out). It carries out the reaction guanosine(in) = guanosine(out). It catalyses the reaction GTP(in) = GTP(out). The catalysed reaction is 3',5'-cyclic AMP(in) = 3',5'-cyclic AMP(out). The enzyme catalyses creatinine(in) = creatinine(out). It carries out the reaction prostaglandin E2(out) = prostaglandin E2(in). It catalyses the reaction 2-oxoglutarate(in) = 2-oxoglutarate(out). The catalysed reaction is glutarate(in) = glutarate(out). The enzyme catalyses urate(out) = urate(in). It carries out the reaction estrone 3-sulfate(out) = estrone 3-sulfate(in). In terms of biological role, functions as a Na(+)-independent bidirectional multispecific transporter. Contributes to the renal and hepatic elimination of endogenous organic compounds from the systemic circulation into the urine and bile, respectively. Capable of transporting a wide range of purine and pyrimidine nucleobases, nucleosides and nucleotides, with cGMP, 2'deoxyguanosine and GMP being the preferred substrates. Functions as a pH- and chloride-independent cGMP bidirectional facilitative transporter that can regulate both intracellular and extracellular levels of cGMP and may be involved in cGMP signaling pathways. Mediates orotate/glutamate bidirectional exchange and most likely display a physiological role in hepatic release of glutamate into the blood. Involved in renal secretion and possible reabsorption of creatinine. Able to uptake prostaglandin E2 (PGE2) and may contribute to PGE2 renal excretion. Also transports alpha-ketoglutarate and urate. Apart from the orotate/glutamate exchange, the counterions for the uptake of other SLC22A7/OAT2 substrates remain to be identified. The chain is Solute carrier family 22 member 7 (SLC22A7) from Sus scrofa (Pig).